Reading from the N-terminus, the 208-residue chain is dTTP/UTP pyrophosphatase (208 aa).

The Proton acceptor role is filled by D78.

Belongs to the Maf family. YhdE subfamily. The cofactor is a divalent metal cation.

The protein resides in the cytoplasm. It catalyses the reaction dTTP + H2O = dTMP + diphosphate + H(+). It carries out the reaction UTP + H2O = UMP + diphosphate + H(+). Its function is as follows. Nucleoside triphosphate pyrophosphatase that hydrolyzes dTTP and UTP. May have a dual role in cell division arrest and in preventing the incorporation of modified nucleotides into cellular nucleic acids. This is dTTP/UTP pyrophosphatase from Maricaulis maris (strain MCS10) (Caulobacter maris).